Consider the following 173-residue polypeptide: Siroheme decarboxylase alpha subunit (173 aa).

His-115 and Arg-119 together coordinate substrate.

The protein belongs to the Ahb/Nir family. Forms a heterodimer composed of AhbA and AhbB.

It carries out the reaction siroheme + 2 H(+) = 12,18-didecarboxysiroheme + 2 CO2. It functions in the pathway porphyrin-containing compound metabolism; protoheme biosynthesis. Involved in siroheme-dependent heme b biosynthesis. Catalyzes the decarboxylation of siroheme into didecarboxysiroheme. Siroheme is decarboxylated to monodecarboxysiroheme, which is in turn decarboxylated to didecarboxysiroheme. In Desulfovibrio desulfuricans (strain ATCC 27774 / DSM 6949 / MB), this protein is Siroheme decarboxylase alpha subunit.